Reading from the N-terminus, the 1799-residue chain is MSYPNPPPPPKGSASFSSSSSDPFNQTNQLPYDSQFPPQHAFAHPSAPNPGAGGAGVAPPGQGGQYAPYYDNEPEMGGRWEGGGMGRETWASESGWSQNEPNYPPSDYHGGPGYLPSRASTPTFEGSNAGHRPRDPYPAWTVDANIPLSKEEIEDVLIDLANKFGFQKDSSRNVYDFLMIQLDSRASRMSPNQALLTLHADYIGGEHANYRKWYFAAQLDLDDAIGAVQNPGLNRVRSVARRGGKTKNPLATAQEKSLESATSRWRTAMNNMSQYDRLRQVALYLLCWGEAAQVRFMPECLCFIFKCADDYYRSPECQNRQEAVPEGLYLRAVIKPLYRFLRDQGYEVVDGKFLRRERDHDKVIGYDDVNQLFWYPEGISRITLNDNTRLVDIPPAQRFMKFDRIDWNKVFFKTYLEKRSFFHLLVNFNRIWVLHISVFWFFTAYNAPSIYAPSGSTTATTPMAWSMTGLGGFVATLIMIAATLAEFSYIPTTWNNTSHLTRRLIFLLIILAITGGPSIYIAFFNQTGHVALILGIVQFFCSVVATIAFATLPSGRMFGDRVAGKSRKYLANQTFTASYPALGFYPRVASFLLWFLVFGCKFTESYFFLTLSFRDPMKVMNGMKVQNCHDKYFGNGLCTNQPAFALAVMFVMDLTLFFLDTFLWYVIWNTVFSIARSFAIGMSIWTPWKDIFARLPKRIYAKILATDDMEVKYKPKVLVSQVWNAVIISMYREHLLSIEHVQKLLYHQIQSDQPGKRTLRAPAFFISQSEKGSKAEFFPKGSEAERRICFFAQSLTTSIPAPIPVDAMPTFTVLVPHYSEKILLSLREIIREEDQNTRVTLLEYLKQLHPVEWDNFVRDTKILAEESDAFNGGNPFASDEKEEAKKADDIPFYTIGFKSAAPEYTLRTRIWASLRAQTLYRTVSGFMNYSKAIKLLYRVENPEVVQLFGGNTDQLERELERMARRKFKFVVSMQRYSKFNKEEHENAEFLLRAYPDLQIAYLDEEPPRKDGGESRIFSALIDGHSEIMPNGRRRPKFRIELPGNPILGDGKSDNQNHAIVFYRGEYLQLIDANQDNYLEECLKIRNVLGEFEEFKVSTQSPYAAQGHADFAKFPVAILGAREYIFSENIGILGDIAAGKEQTFGTLAARSLSYIGGKLHYGHPDFLNAIYMNTRGGVSKAQKGLHLNEDIFAGMLAFGRGGRIKHSEYYQCGKGRDLGFGTILNFQTKIGTGMGEQMLSREYYYLGTQLPIDRFLTFYYGHPGFHINNILVMMSVQVFMLALVFLGTLNKQLTVCRYSSGGDILPGQSGCYNLVPVFKWIKRCIISIFIVFWIAFVPLFVQELTERGTGRAILRLCKHFLSLSPVFEVFSTQIYMHSILNDLTFGGARYIATGRGFATTRISFSILYSRFAGPSIYLGMRTLVLLLFITLTVWVPHLIYFWITVVGLCVAPFLFNPHQFAIADFIIDYREFLRWMSRGNSRTHANSWVGYCRLSRTRVTGFKRKRLGLPSEKLSSDVPRAPWKAILIGEIIGPICLAILFVICYLFIKSFAVDGQIQPGLVRIAIIALGPIVWNMALLITLFLISVFLGPCLNSYTHQFGATMAALAHFGAVAGMLVFFELLWFLELWNTSHAVLGIIAVISVQRCIFKFLIAVFLSREFKHDETNRAWWTGVWFNRGLGSHALSQPAREFVVKTIEMGLYSADFIACHLLLALLTIPMFIPYFDRVHATMLFWLAPNQQIRPPIYSFRQRSQRRKIVFKYGLLYLIIQGIFIALIVVPIIFKDVAGLTPKSVPFNGII.

The segment covering 1-11 (MSYPNPPPPPK) has biased composition (pro residues). The interval 1–136 (MSYPNPPPPP…SNAGHRPRDP (136 aa)) is disordered. Over residues 12-23 (GSASFSSSSSDP) the composition is skewed to low complexity. A compositionally biased stretch (gly residues) spans 51–64 (GAGGAGVAPPGQGG). The span at 91 to 101 (ASESGWSQNEP) shows a compositional bias: polar residues. Helical transmembrane passes span 431-451 (IWVL…PSIY), 470-490 (LGGF…FSYI), 504-524 (LIFL…IAFF), 530-550 (VALI…IAFA), 591-611 (FLLW…FLTL), 648-668 (VMFV…YVIW), 1268-1288 (NILV…LGTL), 1323-1343 (CIIS…VQEL), 1422-1442 (LVLL…YFWI), 1446-1466 (GLCV…DFII), 1527-1547 (IGEI…YLFI), 1563-1583 (IAII…TLFL), 1605-1625 (ALAH…LWFL), 1635-1655 (LGII…IAVF), 1704-1724 (DFIA…IPYF), and 1762-1782 (GLLY…PIIF).

The protein belongs to the glycosyltransferase 48 family. Component of the 1,3-beta-glucan synthase (GS) complex composed of a catalytic subunit FKS1 and a regulatory subunit RHO1.

It is found in the cell membrane. The enzyme catalyses [(1-&gt;3)-beta-D-glucosyl](n) + UDP-alpha-D-glucose = [(1-&gt;3)-beta-D-glucosyl](n+1) + UDP + H(+). Its activity is regulated as follows. Activated by magnesium ions. Inhibited by caspofungin and cilofungin. Its function is as follows. Catalytic subunit of the 1,3-beta-glucan synthase (GS) complex. Synthesizes 1,3-beta-glucan, a major structural component of the yeast cell wall. Involved in cell wall synthesis, maintenance and remodeling. This Cryptococcus neoformans var. grubii serotype A (strain H99 / ATCC 208821 / CBS 10515 / FGSC 9487) (Filobasidiella neoformans var. grubii) protein is 1,3-beta-glucan synthase component FKS1.